The following is a 513-amino-acid chain: L-threonine dehydratase biosynthetic IlvA (513 aa).

An N6-(pyridoxal phosphate)lysine modification is found at K63. Pyridoxal 5'-phosphate is bound by residues N90, 189–193, and S316; that span reads GGGGL. ACT-like domains follow at residues 340-411 and 433-504; these read ALLA…DMSD and RLYT…DVTK.

It belongs to the serine/threonine dehydratase family. Homotetramer. Pyridoxal 5'-phosphate is required as a cofactor.

It carries out the reaction L-threonine = 2-oxobutanoate + NH4(+). It participates in amino-acid biosynthesis; L-isoleucine biosynthesis; 2-oxobutanoate from L-threonine: step 1/1. In terms of biological role, catalyzes the anaerobic formation of alpha-ketobutyrate and ammonia from threonine in a two-step reaction. The first step involved a dehydration of threonine and a production of enamine intermediates (aminocrotonate), which tautomerizes to its imine form (iminobutyrate). Both intermediates are unstable and short-lived. The second step is the nonenzymatic hydrolysis of the enamine/imine intermediates to form 2-ketobutyrate and free ammonia. In the low water environment of the cell, the second step is accelerated by RidA. The protein is L-threonine dehydratase biosynthetic IlvA (ilvA) of Haemophilus influenzae (strain ATCC 51907 / DSM 11121 / KW20 / Rd).